The chain runs to 647 residues: 1-deoxy-D-xylulose-5-phosphate synthase (647 aa).

Residues histidine 72 and 113-115 (GHA) each bind thiamine diphosphate. Residue aspartate 144 coordinates Mg(2+). Thiamine diphosphate-binding positions include 145 to 146 (GA), asparagine 174, tyrosine 287, and glutamate 370. Asparagine 174 lines the Mg(2+) pocket.

This sequence belongs to the transketolase family. DXPS subfamily. As to quaternary structure, homodimer. Mg(2+) is required as a cofactor. Requires thiamine diphosphate as cofactor.

The catalysed reaction is D-glyceraldehyde 3-phosphate + pyruvate + H(+) = 1-deoxy-D-xylulose 5-phosphate + CO2. It functions in the pathway metabolic intermediate biosynthesis; 1-deoxy-D-xylulose 5-phosphate biosynthesis; 1-deoxy-D-xylulose 5-phosphate from D-glyceraldehyde 3-phosphate and pyruvate: step 1/1. Functionally, catalyzes the acyloin condensation reaction between C atoms 2 and 3 of pyruvate and glyceraldehyde 3-phosphate to yield 1-deoxy-D-xylulose-5-phosphate (DXP). The protein is 1-deoxy-D-xylulose-5-phosphate synthase of Synechococcus sp. (strain WH7803).